A 383-amino-acid polypeptide reads, in one-letter code: Serine protease 23 (383 aa).

The N-terminal stretch at 1-23 is a signal peptide; that stretch reads MAGIPGLLILLLVLLCVFMQVSP. N-linked (GlcNAc...) asparagine glycosylation occurs at Asn-93. A disulfide bond links Cys-160 and Cys-176. Residue His-175 is the Charge relay system of the active site. N-linked (GlcNAc...) asparagine glycosylation is present at Asn-207. Active-site charge relay system residues include Asp-240 and Ser-316.

Belongs to the peptidase S1 family.

The protein resides in the secreted. This is Serine protease 23 (Prss23) from Rattus norvegicus (Rat).